The primary structure comprises 440 residues: 23S rRNA (uracil(1939)-C(5))-methyltransferase RlmD (440 aa).

Positions 1-21 (MRRRTSPRRTTTSKPQPIGPI) are disordered. A TRAM domain is found at 15-73 (PQPIGPIQTFEVDGLTHEAKGVARLQGKVTFIEGALPGETVEAQVNKAGRRFDEAVLVN). [4Fe-4S] cluster is bound by residues cysteine 86, cysteine 92, cysteine 95, and cysteine 169. S-adenosyl-L-methionine contacts are provided by glutamine 273, phenylalanine 302, asparagine 307, glutamate 323, aspartate 350, and aspartate 370. The active-site Nucleophile is cysteine 396.

The protein belongs to the class I-like SAM-binding methyltransferase superfamily. RNA M5U methyltransferase family. RlmD subfamily.

It carries out the reaction uridine(1939) in 23S rRNA + S-adenosyl-L-methionine = 5-methyluridine(1939) in 23S rRNA + S-adenosyl-L-homocysteine + H(+). Catalyzes the formation of 5-methyl-uridine at position 1939 (m5U1939) in 23S rRNA. The chain is 23S rRNA (uracil(1939)-C(5))-methyltransferase RlmD from Marinomonas sp. (strain MWYL1).